The following is a 193-amino-acid chain: Der GTPase-activating protein YihI (193 aa).

Basic residues predominate over residues 1–12 (MSAKQPNRKPTG). Disordered stretches follow at residues 1-91 (MSAK…KLVM) and 143-193 (IIDN…PKKK). The segment covering 13–26 (KRKESDASALDGRE) has biased composition (basic and acidic residues). A compositionally biased stretch (basic residues) spans 27–36 (RKRAAKRKGL). Residues 40–54 (SRQQAEQSSKNNNGK) show a composition bias toward polar residues. Acidic residues predominate over residues 145–160 (DNDDDEEDDGSFDDAS). Residues 184–193 (PEPKPEPKKK) show a composition bias toward basic and acidic residues.

The protein belongs to the YihI family. As to quaternary structure, interacts with Der.

A GTPase-activating protein (GAP) that modifies Der/EngA GTPase function. May play a role in ribosome biogenesis. The chain is Der GTPase-activating protein YihI from Aeromonas salmonicida (strain A449).